The chain runs to 122 residues: Small ribosomal subunit protein uS13 (122 aa).

The tract at residues 98–122 (VRGQRTHTNARTRKGPAKAIAGKKK) is disordered.

The protein belongs to the universal ribosomal protein uS13 family. Part of the 30S ribosomal subunit. Forms a loose heterodimer with protein S19. Forms two bridges to the 50S subunit in the 70S ribosome.

Its function is as follows. Located at the top of the head of the 30S subunit, it contacts several helices of the 16S rRNA. In the 70S ribosome it contacts the 23S rRNA (bridge B1a) and protein L5 of the 50S subunit (bridge B1b), connecting the 2 subunits; these bridges are implicated in subunit movement. Contacts the tRNAs in the A and P-sites. The polypeptide is Small ribosomal subunit protein uS13 (Ruegeria sp. (strain TM1040) (Silicibacter sp.)).